The primary structure comprises 355 residues: Methyltransferase FUS9 (355 aa).

S-adenosyl-L-homocysteine contacts are provided by Tyr-18, Asn-63, Asp-86, Ser-123, and Phe-124. Residue Phe-231 coordinates Mg(2+).

Belongs to the methyltransferase superfamily. Type-7 methyltransferase family. Mg(2+) serves as cofactor.

It functions in the pathway mycotoxin biosynthesis. Methyltransferase; part of the gene cluster that mediates the biosynthesis of the mycotoxin fusarin C. Within the cluster, FUS1, FUS2, FUS8 and FUS9 are sufficient for fusarin production. The roles of the other FUS members are yet undetermined. The fusarin C synthetase FUS1 is responsible for the condensation of one acetyl-coenzyme A (CoA) unit with six malonyl-CoA units and the amide linkage of the arising heptaketide and homoserine, subsequently releasing the first intermediate, prefusarin, as an alcohol with an open ring structure. The cytochrome P450 monooxygenase FUS8 participates in multiple oxidation processes at carbon C-20 and is able to use the FUS1 product as substrate, resulting in formation of 20-hydroxy-prefusarin. This reaction seems to be essential before the 2-pyrrolidone ring closure can be catalyzed by FUS2, generating 20-hydroxy-fusarin. FUS8 is able to further oxidizes carbon C-20 after ring closure, resulting in the formation of carboxy-fusarin C. As the last step, FUS9 methylates the hydroxyl group at C-21 to generate fusarin C. Fusarin C can then rearrange to epi-fusarin C, the (z)-isomers, and fusarin A and fusarin D. The sequence is that of Methyltransferase FUS9 from Gibberella fujikuroi (strain CBS 195.34 / IMI 58289 / NRRL A-6831) (Bakanae and foot rot disease fungus).